The sequence spans 396 residues: Elongation factor Tu 1 (396 aa).

Residues 10 to 206 (KPHVNIGTIG…AVDEYIPTPE (197 aa)) form the tr-type G domain. A G1 region spans residues 19-26 (GHVDHGKT). 19–26 (GHVDHGKT) contributes to the GTP binding site. Residue Thr-26 coordinates Mg(2+). The segment at 60–64 (GITIN) is G2. A G3 region spans residues 81–84 (DCPG). Residues 81–85 (DCPGH) and 136–139 (NKVD) contribute to the GTP site. Residues 136–139 (NKVD) form a G4 region. Positions 174–176 (SAL) are G5.

This sequence belongs to the TRAFAC class translation factor GTPase superfamily. Classic translation factor GTPase family. EF-Tu/EF-1A subfamily. In terms of assembly, monomer.

Its subcellular location is the cytoplasm. The catalysed reaction is GTP + H2O = GDP + phosphate + H(+). In terms of biological role, GTP hydrolase that promotes the GTP-dependent binding of aminoacyl-tRNA to the A-site of ribosomes during protein biosynthesis. The chain is Elongation factor Tu 1 from Hyphomonas neptunium (strain ATCC 15444).